Here is a 280-residue protein sequence, read N- to C-terminus: Tryptophan synthase alpha chain (280 aa).

Active-site proton acceptor residues include E50 and D61.

This sequence belongs to the TrpA family. Tetramer of two alpha and two beta chains.

It catalyses the reaction (1S,2R)-1-C-(indol-3-yl)glycerol 3-phosphate + L-serine = D-glyceraldehyde 3-phosphate + L-tryptophan + H2O. It participates in amino-acid biosynthesis; L-tryptophan biosynthesis; L-tryptophan from chorismate: step 5/5. Functionally, the alpha subunit is responsible for the aldol cleavage of indoleglycerol phosphate to indole and glyceraldehyde 3-phosphate. In Methylorubrum extorquens (strain PA1) (Methylobacterium extorquens), this protein is Tryptophan synthase alpha chain.